The chain runs to 71 residues: UPF0352 protein Spea_1764 (71 aa).

Belongs to the UPF0352 family.

The sequence is that of UPF0352 protein Spea_1764 from Shewanella pealeana (strain ATCC 700345 / ANG-SQ1).